Consider the following 35-residue polypeptide: U2-agatoxin-Aop1a (35 aa).

3 disulfides stabilise this stretch: C3–C19, C10–C24, and C18–C34. L35 is modified (leucine amide).

Belongs to the neurotoxin 01 (U2-agtx) family. As to expression, expressed by the venom gland.

It localises to the secreted. Functionally, insect-selective toxin causing rapid but reversible paralysis in crickets. Suppresses the excitatory postsynaptic potentials evoked in lobster neuromuscular synaptic preparations, possibly by blocking the presynaptic calcium channel (Cav). Induces instantaneous reversible paralysis when injected into crickets. The protein is U2-agatoxin-Aop1a of Allagelena opulenta (Funnel weaving spider).